The sequence spans 147 residues: Large ribosomal subunit protein uL13 (147 aa).

Belongs to the universal ribosomal protein uL13 family. In terms of assembly, part of the 50S ribosomal subunit.

This protein is one of the early assembly proteins of the 50S ribosomal subunit, although it is not seen to bind rRNA by itself. It is important during the early stages of 50S assembly. The chain is Large ribosomal subunit protein uL13 from Pseudarthrobacter chlorophenolicus (strain ATCC 700700 / DSM 12829 / CIP 107037 / JCM 12360 / KCTC 9906 / NCIMB 13794 / A6) (Arthrobacter chlorophenolicus).